The chain runs to 163 residues: Homoaconitase small subunit (163 aa).

The protein belongs to the LeuD family. In terms of assembly, heterodimer of HacA and HacB.

It catalyses the reaction (2R,3S)-homoisocitrate = cis-homoaconitate + H2O. It participates in amino-acid biosynthesis; L-lysine biosynthesis via AAA pathway; L-alpha-aminoadipate from 2-oxoglutarate: step 3/5. With respect to regulation, is not inhibited by lysine. Catalyzes the reversible hydration of cis-homoaconitate ((Z)-but-1-ene-1,2,4-tricarboxylate) to homoisocitrate ((1R,2S)-1-hydroxybutane-1,2,4-tricarboxylate). Can catalyze neither the dehydration of (R)-homocitrate ((2R)-2-hydroxybutane-1,2,4-tricarboxylate) into cis-homoaconitate in vitro, nor the reverse reaction. Is not active toward (S)-homocitrate, cis-aconitate or citrate as substrate. The protein is Homoaconitase small subunit (hacB) of Thermus thermophilus (strain ATCC BAA-163 / DSM 7039 / HB27).